The chain runs to 366 residues: DNA-directed RNA polymerase II subunit GRINL1A (366 aa).

The interval 1 to 23 (MFSLPRGFEPPAPEDLGRQSSAE) is disordered. The stretch at 15–39 (DLGRQSSAELRERLRRQERLLRNEK) forms a coiled coil. The interval 29-68 (RRQERLLRNEKFICKLPDKGKKISDTVAKLKAAISEREEV) is important for transcription repressor activity. 4 disordered regions span residues 88 to 140 (ATTR…HRGN), 158 to 182 (IRAR…QEEE), 201 to 225 (ADQS…ETPK), and 237 to 280 (ARNP…RRAR). Residues 90–100 (TRADTDVDKAQ) show a composition bias toward basic and acidic residues. Positions 101–127 (SSDLMLDTSSLDPDCSSIDIKSSKSTS) are enriched in low complexity. The tract at residues 225–296 (KKPHYMKVLE…TAARLLPLHH (72 aa)) is interaction with Pol II. Over residues 251 to 272 (VLPTQQSDSPSHCQRGQSPASS) the composition is skewed to polar residues. Phosphoserine is present on Ser268. Positions 297–312 (LPAQLLSIEESLALQR) are important for transcription repressor activity. A coiled-coil region spans residues 299–333 (AQLLSIEESLALQREQKQNYEEMQAKLAAQKLAER). Residues 313 to 338 (EQKQNYEEMQAKLAAQKLAERLNIKM) are interaction with Pol II. Residues 338-366 (MQSYNPEGESSGRYREVRDEADAQSSDEC) are disordered. Residues 347 to 358 (SSGRYREVRDEA) show a composition bias toward basic and acidic residues.

This sequence belongs to the GRINL1 family. In terms of assembly, component of the Pol II(G) complex, which contains the RNA polymerase II (Pol II) core complex subunits and POLR2M isoform 1. Pol II(G) appears to be an abundant form of Pol II. Post-translationally, dephosphorylated at Ser-268 by the PNUTS-PP1 complex, promoting RNA polymerase II transcription pause-release.

The protein localises to the nucleus. Functionally, appears to be a stable component of the Pol II(G) complex form of RNA polymerase II (Pol II). Pol II synthesizes mRNA precursors and many functional non-coding RNAs and is the central component of the basal RNA polymerase II transcription machinery. May play a role in the Mediator complex-dependent regulation of transcription activation. Acts as a negative regulator of transcriptional activation; this repression is relieved by the Mediator complex, which restores Pol II(G) activator-dependent transcription to a level equivalent to that of Pol II. The polypeptide is DNA-directed RNA polymerase II subunit GRINL1A (Polr2m) (Mus musculus (Mouse)).